A 419-amino-acid polypeptide reads, in one-letter code: UDP-N-acetylglucosamine 1-carboxyvinyltransferase (419 aa).

22–23 serves as a coordination point for phosphoenolpyruvate; that stretch reads KN. Arginine 92 lines the UDP-N-acetyl-alpha-D-glucosamine pocket. Cysteine 116 (proton donor) is an active-site residue. Residue cysteine 116 is modified to 2-(S-cysteinyl)pyruvic acid O-phosphothioketal. Residues aspartate 306 and isoleucine 328 each contribute to the UDP-N-acetyl-alpha-D-glucosamine site.

It belongs to the EPSP synthase family. MurA subfamily.

It localises to the cytoplasm. The enzyme catalyses phosphoenolpyruvate + UDP-N-acetyl-alpha-D-glucosamine = UDP-N-acetyl-3-O-(1-carboxyvinyl)-alpha-D-glucosamine + phosphate. It functions in the pathway cell wall biogenesis; peptidoglycan biosynthesis. Functionally, cell wall formation. Adds enolpyruvyl to UDP-N-acetylglucosamine. In Psychromonas ingrahamii (strain DSM 17664 / CCUG 51855 / 37), this protein is UDP-N-acetylglucosamine 1-carboxyvinyltransferase.